The sequence spans 367 residues: 3-isopropylmalate dehydrogenase (367 aa).

An NAD(+)-binding site is contributed by Gly-75–Glu-88. Arg-95, Arg-105, Arg-133, and Asp-230 together coordinate substrate. Mg(2+)-binding residues include Asp-230, Asp-254, and Asp-258. Gly-288–Asn-300 contacts NAD(+).

This sequence belongs to the isocitrate and isopropylmalate dehydrogenases family. LeuB type 1 subfamily. In terms of assembly, homodimer. Mg(2+) is required as a cofactor. Mn(2+) serves as cofactor.

It is found in the cytoplasm. The enzyme catalyses (2R,3S)-3-isopropylmalate + NAD(+) = 4-methyl-2-oxopentanoate + CO2 + NADH. Its pathway is amino-acid biosynthesis; L-leucine biosynthesis; L-leucine from 3-methyl-2-oxobutanoate: step 3/4. Catalyzes the oxidation of 3-carboxy-2-hydroxy-4-methylpentanoate (3-isopropylmalate) to 3-carboxy-4-methyl-2-oxopentanoate. The product decarboxylates to 4-methyl-2 oxopentanoate. The sequence is that of 3-isopropylmalate dehydrogenase from Psychrobacter cryohalolentis (strain ATCC BAA-1226 / DSM 17306 / VKM B-2378 / K5).